Reading from the N-terminus, the 639-residue chain is MGKIIGIDLGTTNSCVAVLDGGKARVLENAEGDRTTPSIIAYTDDETIVGQPAKRQAVTNPNNTFFAIKRLIGRRFKDDEVQRDVNIMPFKIIQADNGDAWVESRGNKMAPPQVSAEILKKMKKTAEDFLGEEVTEAVITVPAYFNDSQRQATKDAGRIAGLEVKRIINEPTAAALAYGIDKKQGDNIVAVYDLGGGTFDISIIEIDSNDGDQTFEVLATNGDTHLGGEDFDNRLINYLADEFKKEQGLDLRKDPLAMQRLKEAAEKAKIELSSTNQTEVNLPYITADATGPKHLVVKITRAKLESLVEDLIIRTLEPLKVALADADLSVSDINEVILVGGQTRMPKVQEAVTNFFGKEPRKDVNPDEAVAVGAAIQAGVLSGDVKDVLLLDVTPLSLGIETMGSVMTKLIEKNTTIPTKAQQVFSTADDNQSAVTIHVLQGERKQASANKSLGQFNLDGIEPAPRGMPQIEVMFDIDADGILHVSATDKKTGKKQNITIKASSGLSEEEVAQMVRDAEAHAEEDKKFEELVQSRNQADGLVHATKKQVEEAGDALPADDKAKIEAAMSAVEVATKGNDKEAIEKATQELIEASAKLMEIAQAKAQTQGGAQEGAAKQSNATADDVVDAEFEEVKDDKK.

T198 carries the post-translational modification Phosphothreonine; by autocatalysis. Low complexity predominate over residues A603–Q618. The segment at A603–K639 is disordered. Residues D625–K639 show a composition bias toward acidic residues.

This sequence belongs to the heat shock protein 70 family.

In terms of biological role, acts as a chaperone. The polypeptide is Chaperone protein DnaK (Shewanella sp. (strain MR-4)).